The chain runs to 262 residues: 3-deoxy-manno-octulosonate cytidylyltransferase (262 aa).

This sequence belongs to the KdsB family.

It is found in the cytoplasm. It catalyses the reaction 3-deoxy-alpha-D-manno-oct-2-ulosonate + CTP = CMP-3-deoxy-beta-D-manno-octulosonate + diphosphate. Its pathway is nucleotide-sugar biosynthesis; CMP-3-deoxy-D-manno-octulosonate biosynthesis; CMP-3-deoxy-D-manno-octulosonate from 3-deoxy-D-manno-octulosonate and CTP: step 1/1. It participates in bacterial outer membrane biogenesis; lipopolysaccharide biosynthesis. Its function is as follows. Activates KDO (a required 8-carbon sugar) for incorporation into bacterial lipopolysaccharide in Gram-negative bacteria. The sequence is that of 3-deoxy-manno-octulosonate cytidylyltransferase from Blochmanniella pennsylvanica (strain BPEN).